Here is a 239-residue protein sequence, read N- to C-terminus: Ribose-5-phosphate isomerase A (239 aa).

Substrate-binding positions include 40–43 (SGST), 96–99 (DGAD), and 110–113 (KGGG). The active-site Proton acceptor is Glu-119. Lys-137 lines the substrate pocket.

The protein belongs to the ribose 5-phosphate isomerase family. Homodimer.

It catalyses the reaction aldehydo-D-ribose 5-phosphate = D-ribulose 5-phosphate. It functions in the pathway carbohydrate degradation; pentose phosphate pathway; D-ribose 5-phosphate from D-ribulose 5-phosphate (non-oxidative stage): step 1/1. Catalyzes the reversible conversion of ribose-5-phosphate to ribulose 5-phosphate. The chain is Ribose-5-phosphate isomerase A from Methanococcus maripaludis (strain C5 / ATCC BAA-1333).